Reading from the N-terminus, the 374-residue chain is Alanine racemase (374 aa).

Lysine 40 functions as the Proton acceptor; specific for D-alanine in the catalytic mechanism. Lysine 40 is modified (N6-(pyridoxal phosphate)lysine). Arginine 136 contributes to the substrate binding site. Tyrosine 264 serves as the catalytic Proton acceptor; specific for L-alanine. Residue methionine 311 coordinates substrate.

This sequence belongs to the alanine racemase family. Pyridoxal 5'-phosphate serves as cofactor.

The catalysed reaction is L-alanine = D-alanine. The protein operates within amino-acid biosynthesis; D-alanine biosynthesis; D-alanine from L-alanine: step 1/1. Catalyzes the interconversion of L-alanine and D-alanine. May also act on other amino acids. The protein is Alanine racemase (alr) of Pediococcus pentosaceus (strain ATCC 25745 / CCUG 21536 / LMG 10740 / 183-1w).